A 235-amino-acid polypeptide reads, in one-letter code: tRNA (guanine-N(1)-)-methyltransferase (235 aa).

S-adenosyl-L-methionine-binding positions include glycine 114 and 134–139 (IGDYIL).

It belongs to the RNA methyltransferase TrmD family. Homodimer.

It is found in the cytoplasm. The enzyme catalyses guanosine(37) in tRNA + S-adenosyl-L-methionine = N(1)-methylguanosine(37) in tRNA + S-adenosyl-L-homocysteine + H(+). Specifically methylates guanosine-37 in various tRNAs. This chain is tRNA (guanine-N(1)-)-methyltransferase, found in Ehrlichia canis (strain Jake).